A 390-amino-acid polypeptide reads, in one-letter code: Chorismate synthase (390 aa).

The NADP(+) site is built by arginine 40 and arginine 46. Residues 129–131, 249–250, glycine 294, 309–313, and arginine 335 contribute to the FMN site; these read RAS, QA, and KPIPT.

It belongs to the chorismate synthase family. Homotetramer. Requires FMNH2 as cofactor.

It carries out the reaction 5-O-(1-carboxyvinyl)-3-phosphoshikimate = chorismate + phosphate. It functions in the pathway metabolic intermediate biosynthesis; chorismate biosynthesis; chorismate from D-erythrose 4-phosphate and phosphoenolpyruvate: step 7/7. Its function is as follows. Catalyzes the anti-1,4-elimination of the C-3 phosphate and the C-6 proR hydrogen from 5-enolpyruvylshikimate-3-phosphate (EPSP) to yield chorismate, which is the branch point compound that serves as the starting substrate for the three terminal pathways of aromatic amino acid biosynthesis. This reaction introduces a second double bond into the aromatic ring system. This is Chorismate synthase from Desulforudis audaxviator (strain MP104C).